The sequence spans 600 residues: CTP synthase (600 aa).

In terms of domain architecture, Glutamine amidotransferase type-1 spans 304-570; that stretch reads TIVLVGKYTH…IQSGEEVEWS (267 aa). Active-site for GATase activity residues include cysteine 403, histidine 532, and glutamate 534.

Belongs to the CTP synthase family.

The catalysed reaction is UTP + L-glutamine + ATP + H2O = CTP + L-glutamate + ADP + phosphate + 2 H(+). The protein operates within pyrimidine metabolism; CTP biosynthesis via de novo pathway; CTP from UDP: step 2/2. Catalyzes the ATP-dependent amination of UTP to CTP with either L-glutamine or ammonia as the source of nitrogen. The sequence is that of CTP synthase (ura7) from Schizosaccharomyces pombe (strain 972 / ATCC 24843) (Fission yeast).